The primary structure comprises 718 residues: MAAKRSRAAMEEQEKTSTRSDDREQAVNRWVLQFYFHQAVAAYRAGRNRDFRQLRDVMQALLVRPLEREPAVAQMLRVMQFLSRIEEGENLDCTFDKETELTPLESAIGILQLIAKEFSVPEKKIELIHKVLKEAAVIVCIKNKEFSKALAVLKRHMEKDTGNQKKRTELQTIIREKNRAHPIIRDFSYVNFQQYMFQFLKTYVDTSEPLLVTMMKSLNSERAEEPKRSSVTPESPSRTEDQEEAYEPLRRVKHSVGTLRRAETAGGVAGAPSCPEMAKDPTGAPEHVGTVKDAVRAPCPAESTEDSQGTPRCAETARDVMGAPSPSEMTKDLLGAPKCTETARDVVRAPSPAESTKDPVGTPGHAETARDVARAPSPAETTKNLPGAPECADTVKNTVRAPSPAERRKDLVRAPKRAETARDVVRAPSPAERVKDTAGASEPMKSASYPTASQPRIAAVKSSKVFSVPVEISEQPAAAAPVHAGVSSRDLERTPFRTVTTYGISVLREAFKMLSNSPDSDALFNKLDETDLPSPQQMSPSVSHRTKRRKEEKNQGSETLDSPEIPHKSKRLFTISKMIMDQGSQCSKSSESPDSSQERVVSSAYRPVQELPDQPVSTKRSSQQRWNSSYGEERKDSWSDEDELFTDAALTETSSNNSTVYGSKKQKWTVQESEWIKDGVRKYGEGRWKTISEKYPFQNRTSVQIKDRYRTMKKLGIA.

Disordered regions lie at residues 1–22 (MAAK…RSDD) and 219–286 (NSER…GAPE). 2 stretches are compositionally biased toward basic and acidic residues: residues 8–22 (AAME…RSDD) and 219–228 (NSERAEEPKR). The interval 24–220 (EQAVNRWVLQ…LVTMMKSLNS (197 aa)) is TRFH dimerization. 15 repeat units span residues 257–269 (GTLR…GGVA), 270–282 (GAPS…KDPT), 283–295 (GAPE…KDAV), 296–308 (RAPC…EDSQ), 309–321 (GTPR…RDVM), 322–334 (GAPS…KDLL), 335–347 (GAPK…RDVV), 348–360 (RAPS…KDPV), 361–373 (GTPG…RDVA), 374–386 (RAPS…KNLP), 387–399 (GAPE…KNTV), 400–412 (RAPS…KDLV), 413–425 (RAPK…RDVV), 426–438 (RAPS…KDTA), and 439–451 (GASE…SYPT). The tract at residues 257–451 (GTLRRAETAG…EPMKSASYPT (195 aa)) is 15 X 13 AA approximate tandem repeats. Disordered regions lie at residues 342 to 455 (TARD…ASQP) and 524 to 641 (FNKL…WSDE). Residues 405-425 (AERRKDLVRAPKRAETARDVV) are compositionally biased toward basic and acidic residues. The segment covering 533–543 (PSPQQMSPSVS) has biased composition (polar residues). Residues 545–550 (RTKRRK) carry the Nuclear localization signal motif. Residues 584–595 (SQCSKSSESPDS) are compositionally biased toward low complexity. Residues 615 to 630 (PVSTKRSSQQRWNSSY) show a composition bias toward polar residues. The HTH myb-type domain occupies 664-717 (KKQKWTVQESEWIKDGVRKYGEGRWKTISEKYPFQNRTSVQIKDRYRTMKKLGI). Residues 688-713 (WKTISEKYPFQNRTSVQIKDRYRTMK) constitute a DNA-binding region (H-T-H motif).

In terms of assembly, homodimer. Component of the shelterin complex (telosome). Interacts with TERF2IP/RAP1. Highly expressed in embryo.

The protein resides in the nucleus. The protein localises to the chromosome. It is found in the telomere. In terms of biological role, binds the telomeric double-stranded 5'-TTAGGG-3' repeat and plays a central role in telomere maintenance and protection against end-to-end fusion of chromosomes. In addition to its telomeric DNA-binding role, required to recruit a number of factors and enzymes required for telomere protection, including the shelterin complex, TERF2IP/RAP1 and DCLRE1B/Apollo. Component of the shelterin complex (telosome) that is involved in the regulation of telomere length and protection. Shelterin associates with arrays of double-stranded 5'-TTAGGG-3' repeats added by telomerase and protects chromosome ends; without its protective activity, telomeres are no longer hidden from the DNA damage surveillance and chromosome ends are inappropriately processed by DNA repair pathways. Together with DCLRE1B/Apollo, plays a key role in telomeric loop (T loop) formation by generating 3' single-stranded overhang at the leading end telomeres: T loops have been proposed to protect chromosome ends from degradation and repair. Required both to recruit DCLRE1B/Apollo to telomeres and activate the exonuclease activity of DCLRE1B/Apollo. Together with DCLRE1B/Apollo, required to control the amount of DNA topoisomerase (TOP1, TOP2A and TOP2B) needed for telomere replication during fork passage and prevent aberrant telomere topology. Recruits TERF2IP/RAP1 to telomeres, thereby participating in to repressing homology-directed repair (HDR), which can affect telomere length. This chain is Telomeric repeat-binding factor 2 (TERF2), found in Gallus gallus (Chicken).